Consider the following 227-residue polypeptide: Ribonuclease 3 (227 aa).

Residues 7 to 132 (LTAFMDRLGY…VIAAVYLDGG (126 aa)) enclose the RNase III domain. Glu45 contributes to the Mg(2+) binding site. Asp49 is a catalytic residue. Mg(2+)-binding residues include Asp118 and Glu121. The active site involves Glu121. The DRBM domain maps to 157–226 (DAKTALQEWA…AKDLLAQLAG (70 aa)).

The protein belongs to the ribonuclease III family. In terms of assembly, homodimer. Requires Mg(2+) as cofactor.

The protein localises to the cytoplasm. It carries out the reaction Endonucleolytic cleavage to 5'-phosphomonoester.. In terms of biological role, digests double-stranded RNA. Involved in the processing of primary rRNA transcript to yield the immediate precursors to the large and small rRNAs (23S and 16S). Processes some mRNAs, and tRNAs when they are encoded in the rRNA operon. Processes pre-crRNA and tracrRNA of type II CRISPR loci if present in the organism. The sequence is that of Ribonuclease 3 from Jannaschia sp. (strain CCS1).